We begin with the raw amino-acid sequence, 268 residues long: Gene 65 protein (268 aa).

This is Gene 65 protein (65) from Mycobacterium (Mycobacteriophage L5).